We begin with the raw amino-acid sequence, 298 residues long: UDP-N-acetylenolpyruvoylglucosamine reductase (298 aa).

The FAD-binding PCMH-type domain maps to 26–191; that stretch reads KTGGEAEYLA…LSATFSLTPG (166 aa). The active site involves Arg170. Ser220 serves as the catalytic Proton donor. Residue Glu290 is part of the active site.

The protein belongs to the MurB family. Requires FAD as cofactor.

Its subcellular location is the cytoplasm. It carries out the reaction UDP-N-acetyl-alpha-D-muramate + NADP(+) = UDP-N-acetyl-3-O-(1-carboxyvinyl)-alpha-D-glucosamine + NADPH + H(+). It functions in the pathway cell wall biogenesis; peptidoglycan biosynthesis. In terms of biological role, cell wall formation. The polypeptide is UDP-N-acetylenolpyruvoylglucosamine reductase (Lactobacillus helveticus (strain DPC 4571)).